We begin with the raw amino-acid sequence, 247 residues long: Ubiquinone biosynthesis O-methyltransferase (247 aa).

S-adenosyl-L-methionine contacts are provided by R40, G71, D92, and M135.

Belongs to the methyltransferase superfamily. UbiG/COQ3 family.

It carries out the reaction a 3-demethylubiquinol + S-adenosyl-L-methionine = a ubiquinol + S-adenosyl-L-homocysteine + H(+). The enzyme catalyses a 3-(all-trans-polyprenyl)benzene-1,2-diol + S-adenosyl-L-methionine = a 2-methoxy-6-(all-trans-polyprenyl)phenol + S-adenosyl-L-homocysteine + H(+). The protein operates within cofactor biosynthesis; ubiquinone biosynthesis. Its function is as follows. O-methyltransferase that catalyzes the 2 O-methylation steps in the ubiquinone biosynthetic pathway. The sequence is that of Ubiquinone biosynthesis O-methyltransferase from Ruegeria sp. (strain TM1040) (Silicibacter sp.).